We begin with the raw amino-acid sequence, 178 residues long: Large ribosomal subunit protein uL6 (178 aa).

The protein belongs to the universal ribosomal protein uL6 family. Part of the 50S ribosomal subunit.

Functionally, this protein binds to the 23S rRNA, and is important in its secondary structure. It is located near the subunit interface in the base of the L7/L12 stalk, and near the tRNA binding site of the peptidyltransferase center. This Nitratiruptor sp. (strain SB155-2) protein is Large ribosomal subunit protein uL6.